Consider the following 267-residue polypeptide: 4-hydroxy-tetrahydrodipicolinate reductase (267 aa).

Residues 8–13 (GAGGRM) and Glu-34 each bind NAD(+). Residue Arg-35 coordinates NADP(+). NAD(+)-binding positions include 98-100 (GTT) and 122-125 (APNM). His-155 acts as the Proton donor/acceptor in catalysis. Position 156 (His-156) interacts with (S)-2,3,4,5-tetrahydrodipicolinate. The active-site Proton donor is Lys-159. 165 to 166 (GT) contacts (S)-2,3,4,5-tetrahydrodipicolinate.

It belongs to the DapB family.

The protein localises to the cytoplasm. It catalyses the reaction (S)-2,3,4,5-tetrahydrodipicolinate + NAD(+) + H2O = (2S,4S)-4-hydroxy-2,3,4,5-tetrahydrodipicolinate + NADH + H(+). It carries out the reaction (S)-2,3,4,5-tetrahydrodipicolinate + NADP(+) + H2O = (2S,4S)-4-hydroxy-2,3,4,5-tetrahydrodipicolinate + NADPH + H(+). It participates in amino-acid biosynthesis; L-lysine biosynthesis via DAP pathway; (S)-tetrahydrodipicolinate from L-aspartate: step 4/4. Catalyzes the conversion of 4-hydroxy-tetrahydrodipicolinate (HTPA) to tetrahydrodipicolinate. The protein is 4-hydroxy-tetrahydrodipicolinate reductase of Thioalkalivibrio sulfidiphilus (strain HL-EbGR7).